The primary structure comprises 812 residues: Mitochondrial intermediate peptidase (812 aa).

Residues 1–35 (MLKLLRPRPWVCNSCLNRVAFPKPYPVGSRSTRWL) constitute a mitochondrion transit peptide. The disordered stretch occupies residues 518-544 (STSEGGPAFGSPESAANDGMAASRGAS). His587 contacts Zn(2+). Glu588 is an active-site residue. Zn(2+) is bound by residues His591 and His594.

The protein belongs to the peptidase M3 family. Zn(2+) is required as a cofactor.

Its subcellular location is the mitochondrion matrix. It catalyses the reaction Release of an N-terminal octapeptide as second stage of processing of some proteins imported into the mitochondrion.. Cleaves proteins, imported into the mitochondrion, to their mature size. While most mitochondrial precursor proteins are processed to the mature form in one step by mitochondrial processing peptidase (MPP), the sequential cleavage by MIP of an octapeptide after initial processing by MPP is a required step for a subgroup of nuclear-encoded precursor proteins destined for the matrix or the inner membrane. The chain is Mitochondrial intermediate peptidase (OCT1) from Pyricularia oryzae (strain 70-15 / ATCC MYA-4617 / FGSC 8958) (Rice blast fungus).